A 140-amino-acid polypeptide reads, in one-letter code: ISDra2 transposase TnpA (140 aa).

Mg(2+)-binding residues include His-67 and His-69. A mobile alpha helix region spans residues 127–133 (AQIQKYI). Tyr-132 acts as the Nucleophile in catalysis. Position 136 (Gln-136) interacts with Mg(2+).

It belongs to the transposase 17 family. As to quaternary structure, homodimer. Mg(2+) is required as a cofactor.

Its activity is regulated as follows. Both the excision and insertion steps are inhibited by TnpB. A transposase that is part of insertion sequence (IS) element ISDra2, it is necessary and sufficient for both transposon excision and insertion of ISDra2. This protein alone can be provided in trans and allows transposition of an empty IS element (tnpA or tnpA-tnpB replaced by a selectable marker). ISDra2 binds subterminal imperfect palindromes at the left (LE) and right (RE) ends of the element and cleaves only the 'top strand' which is circularized and subsequently reinserted into the DNA target. This is called a 'peel and paste' mechanism and increases the copy number of the IS. Transposition is linked to DNA replication in the absence of irradiation, with maximal activity when the 'top strand' is on the replication lagging strand, and occurs preferentially on the lagging strand. The IS element inserts 3' of the target sequence 5'-TTGAT-3'; target duplication has not been observed. The chain is ISDra2 transposase TnpA from Deinococcus radiodurans (strain ATCC 13939 / DSM 20539 / JCM 16871 / CCUG 27074 / LMG 4051 / NBRC 15346 / NCIMB 9279 / VKM B-1422 / R1).